Consider the following 223-residue polypeptide: MLSARDRRDRHPEEGVVAELQGFAVDKAFLTSHKGILLETELALTLIIFICFTASISAYMAAALLEFFITLAFLFLYATQYYQRFDRINWPCLLQGHGQSGGPHPLDLLSHSAKVQPQPWPGLTPPGWHTPAAVPWVPAPAPGFWSWLLWFICFHSLGSSDFLRCVSAIIIFLVVSFAAVTSRDGAAIAAFVFGIILVSIFAYDAFKIYRTEMAPGASQGDQQ.

The region spanning 29 to 213 is the MARVEL domain; it reads FLTSHKGILL…DAFKIYRTEM (185 aa). The next 4 membrane-spanning stretches (helical) occupy residues 35-55, 56-76, 162-182, and 186-206; these read GILL…FTAS, ISAY…FLFL, FLRC…AVTS, and AAIA…YDAF.

The protein belongs to the chemokine-like factor family. Highly expressed in the brain.

The protein resides in the membrane. This is CKLF-like MARVEL transmembrane domain-containing protein 5 (CMTM5) from Homo sapiens (Human).